Reading from the N-terminus, the 377-residue chain is Chaperone protein DnaJ (377 aa).

The 66-residue stretch at 5-70 (DYYEVLGLQK…QKRAAYDQYG (66 aa)) folds into the J domain. A CR-type zinc finger spans residues 134–212 (GCKKDIRLST…CHGDGRVQKA (79 aa)). Zn(2+)-binding residues include Cys147, Cys150, Cys164, Cys167, Cys186, Cys189, Cys200, and Cys203. CXXCXGXG motif repeat units lie at residues 147–154 (CDNCHGTG), 164–171 (CPHCHGAG), 186–193 (CPSCHGTG), and 200–207 (CHSCHGDG).

Belongs to the DnaJ family. As to quaternary structure, homodimer. It depends on Zn(2+) as a cofactor.

It is found in the cytoplasm. Its function is as follows. Participates actively in the response to hyperosmotic and heat shock by preventing the aggregation of stress-denatured proteins and by disaggregating proteins, also in an autonomous, DnaK-independent fashion. Unfolded proteins bind initially to DnaJ; upon interaction with the DnaJ-bound protein, DnaK hydrolyzes its bound ATP, resulting in the formation of a stable complex. GrpE releases ADP from DnaK; ATP binding to DnaK triggers the release of the substrate protein, thus completing the reaction cycle. Several rounds of ATP-dependent interactions between DnaJ, DnaK and GrpE are required for fully efficient folding. Also involved, together with DnaK and GrpE, in the DNA replication of plasmids through activation of initiation proteins. The chain is Chaperone protein DnaJ from Haemophilus ducreyi (strain 35000HP / ATCC 700724).